The sequence spans 274 residues: 2,3,4,5-tetrahydropyridine-2,6-dicarboxylate N-succinyltransferase (274 aa).

This sequence belongs to the transferase hexapeptide repeat family.

Its subcellular location is the cytoplasm. It catalyses the reaction (S)-2,3,4,5-tetrahydrodipicolinate + succinyl-CoA + H2O = (S)-2-succinylamino-6-oxoheptanedioate + CoA. It participates in amino-acid biosynthesis; L-lysine biosynthesis via DAP pathway; LL-2,6-diaminopimelate from (S)-tetrahydrodipicolinate (succinylase route): step 1/3. The polypeptide is 2,3,4,5-tetrahydropyridine-2,6-dicarboxylate N-succinyltransferase (Yersinia pseudotuberculosis serotype IB (strain PB1/+)).